A 480-amino-acid polypeptide reads, in one-letter code: Proline--tRNA ligase (480 aa).

It belongs to the class-II aminoacyl-tRNA synthetase family. ProS type 3 subfamily. In terms of assembly, homodimer.

It localises to the cytoplasm. It catalyses the reaction tRNA(Pro) + L-proline + ATP = L-prolyl-tRNA(Pro) + AMP + diphosphate. In terms of biological role, catalyzes the attachment of proline to tRNA(Pro) in a two-step reaction: proline is first activated by ATP to form Pro-AMP and then transferred to the acceptor end of tRNA(Pro). The polypeptide is Proline--tRNA ligase (Roseiflexus sp. (strain RS-1)).